We begin with the raw amino-acid sequence, 597 residues long: MFS-type transporter FPY5 (597 aa).

A disordered region spans residues 1–55 (MSETTGLPLKHLQGSPPGTPVNTNNESNEASPDDGCRLPDTVTEAEASSDNHGSV). 2 stretches are compositionally biased toward polar residues: residues 20 to 30 (PVNTNNESNEA) and 46 to 55 (EASSDNHGSV). A glycan (N-linked (GlcNAc...) asparagine) is linked at N25. An N-linked (GlcNAc...) asparagine glycan is attached at N72. 9 helical membrane-spanning segments follow: residues 94 to 114 (LSLL…VSIV), 120 to 140 (FNMA…FLII), 147 to 167 (IFGC…FSMA), 183 to 203 (FQGM…PLMV), 214 to 234 (IMSS…GAIT), 241 to 261 (WVFY…AFSV), 286 to 306 (VDFV…FALE), 316 to 336 (SGAI…FIAW), and 360 to 380 (FVMG…AALI). A glycan (N-linked (GlcNAc...) asparagine) is linked at N390. 5 helical membrane passes run 402–422 (LPLL…VSKL), 424–444 (VPPL…VGLY), 463–483 (IMGL…PLVV), 498–518 (IRVL…INHI), and 562–582 (EQMR…VLLV).

It belongs to the major facilitator superfamily. TCR/Tet family.

The protein localises to the membrane. It functions in the pathway secondary metabolite biosynthesis. In terms of biological role, MFS-type transporter; part of the gene cluster that mediates the biosynthesis of the gamma-pyrones fusapyrone (FPY) and deoxyfusapyrone (dFPY). This is MFS-type transporter FPY5 from Fusarium mangiferae (Mango malformation disease fungus).